We begin with the raw amino-acid sequence, 169 residues long: Ribosome maturation factor RimM (169 aa).

Positions 94 to 168 constitute a PRC barrel domain; sequence EEGQYYYHQI…KVIVELLEGL (75 aa).

It belongs to the RimM family. In terms of assembly, binds ribosomal protein uS19.

It localises to the cytoplasm. Functionally, an accessory protein needed during the final step in the assembly of 30S ribosomal subunit, possibly for assembly of the head region. Essential for efficient processing of 16S rRNA. May be needed both before and after RbfA during the maturation of 16S rRNA. It has affinity for free ribosomal 30S subunits but not for 70S ribosomes. The protein is Ribosome maturation factor RimM of Limosilactobacillus fermentum (strain NBRC 3956 / LMG 18251) (Lactobacillus fermentum).